We begin with the raw amino-acid sequence, 31 residues long: Kappa-theraphotoxin-Ps1b (31 aa).

3 disulfide bridges follow: C2-C16, C9-C21, and C15-C25. A Methionine amide modification is found at M31.

Belongs to the neurotoxin 30 (phrixotoxin) family. Expressed by the venom gland.

Its subcellular location is the secreted. Its function is as follows. Potent and specific blocker of Kv4.2/KCND2 (IC(50)=34 nM) and Kv4.3/KCND3 (IC(50)=71 nM) potassium channels. Acts by altering the gating properties of these channels. This chain is Kappa-theraphotoxin-Ps1b, found in Paraphysa scrofa (Chilean copper tarantula).